A 170-amino-acid polypeptide reads, in one-letter code: Adenine phosphoribosyltransferase (170 aa).

The protein belongs to the purine/pyrimidine phosphoribosyltransferase family. As to quaternary structure, homodimer.

The protein resides in the cytoplasm. It catalyses the reaction AMP + diphosphate = 5-phospho-alpha-D-ribose 1-diphosphate + adenine. It participates in purine metabolism; AMP biosynthesis via salvage pathway; AMP from adenine: step 1/1. In terms of biological role, catalyzes a salvage reaction resulting in the formation of AMP, that is energically less costly than de novo synthesis. The sequence is that of Adenine phosphoribosyltransferase from Symbiobacterium thermophilum (strain DSM 24528 / JCM 14929 / IAM 14863 / T).